The sequence spans 649 residues: Quinol oxidase subunit 1 (649 aa).

Residues 1–15 (MKFKWDEFFVTGDPL) are Extracellular-facing. Residues 16–34 (ILGAQVSIALSTIAIIFVL) traverse the membrane as a helical segment. Residues 35-56 (TYFKKWKWLWSEWITTVDHKKL) are Cytoplasmic-facing. Residues 57–75 (GIMYIISAVIMLFRGGVDG) form a helical membrane-spanning segment. Over 76-97 (LMMRAQLALPNNSFLDSNHYNE) the chain is Extracellular. Residues 98 to 117 (IFTTHGTIMIIFMAMPFLIG) traverse the membrane as a helical segment. Histidine 102 contacts Fe(II)-heme a. Over 118–139 (LINVVVPLQIGARDVAFPYLNN) the chain is Cytoplasmic. The helical transmembrane segment at 140–157 (LSFWTFFVGAMLFNISFV) threads the bilayer. Over 158 to 190 (IGGSPNAGWTSYMPLASNDMSPGPGENYYLLGL) the chain is Extracellular. A helical membrane pass occupies residues 191 to 209 (QIAGIGTLMTGINFMVTIL). Over 210 to 227 (KMRTKGMTLMRMPMFTWT) the chain is Cytoplasmic. The chain crosses the membrane as a helical span at residues 228-246 (TLITMVIIVFAFPVLTVAL). Over 247–272 (ALLSFDRLFGAHFFTLEAGGMPMLWA) the chain is Extracellular. A helical transmembrane segment spans residues 273 to 292 (NLFWIWGHPEVYIVILPAFG). Positions 280 and 284 each coordinate Cu cation. The 1'-histidyl-3'-tyrosine (His-Tyr) cross-link spans 280 to 284 (HPEVY). Residues 293–315 (IFSEIISSFARKQLFGYKAMVGS) are Cytoplasmic-facing. Residues 316–335 (IIAISVLSFLVWTHHFFTMG) traverse the membrane as a helical segment. Histidine 329 and histidine 330 together coordinate Cu cation. Topologically, residues 336–343 (NSASVNSF) are extracellular. Residues 344 to 362 (FSITTMAISIPTGVKIFNW) form a helical membrane-spanning segment. The Cytoplasmic portion of the chain corresponds to 363 to 377 (LFTMYKGRISFTTPM). The helical transmembrane segment at 378-397 (LWALAFIPNFVIGGVTGVML) threads the bilayer. Topologically, residues 398-405 (AMAAADYQ) are extracellular. Residues 406 to 425 (YHNTYFLVSHFHYVLIAGTV) form a helical membrane-spanning segment. Histidine 415 provides a ligand contact to heme a3. Histidine 417 is a Fe(II)-heme a binding site. Residues 426–452 (FACFAGFIFWYPKMFGHKLNERIGKWF) are Cytoplasmic-facing. A helical membrane pass occupies residues 453–472 (FWIFMIGFNICFFPQYFLGL). Residues 473–490 (QGMPRRIYTYGPNDGWTT) are Extracellular-facing. The helical transmembrane segment at 491–510 (LNFISTVGAFMMGVGFLILC) threads the bilayer. Topologically, residues 511–584 (YNIYYSFRYS…SKFKKIHMPS (74 aa)) are cytoplasmic. Residues 585-604 (NSGRPFFMSVAFGLAGFGLV) traverse the membrane as a helical segment. Over 605–610 (FEWYWM) the chain is Extracellular. The helical transmembrane segment at 611–631 (GVVGLIGVLLCMVLRSFEYDN) threads the bilayer. At 632–649 (GYYISVDEIKETERKISE) the chain is on the cytoplasmic side.

This sequence belongs to the heme-copper respiratory oxidase family. It depends on Cu cation as a cofactor. Requires ferriheme a as cofactor. The cofactor is Heme A3..

The protein localises to the cell membrane. It carries out the reaction 2 a quinol + O2 = 2 a quinone + 2 H2O. It participates in energy metabolism; oxidative phosphorylation. In terms of biological role, catalyzes quinol oxidation with the concomitant reduction of oxygen to water. Major component for energy conversion during vegetative growth. This Bacillus subtilis (strain 168) protein is Quinol oxidase subunit 1 (qoxB).